Consider the following 686-residue polypeptide: Glycogenin (686 aa).

UDP-binding residues include Leu-13, Asn-16, Tyr-19, and Arg-82. 13 residues coordinate UDP-alpha-D-glucose: Leu-13, Asn-16, Tyr-19, Arg-82, Lys-91, Asp-107, Ala-108, Asp-109, Asn-139, Thr-140, Asp-166, Asp-169, and Gln-170. The UDP site is built by Asp-107, Ala-108, and Asp-109. A Mn(2+)-binding site is contributed by Asp-107. Asp-109 serves as a coordination point for Mn(2+). Residues Tyr-196 and Tyr-198 are each glycosylated (O-linked (Glc...) tyrosine). Residues His-213, Gly-216, and Lys-219 each contribute to the UDP site. His-213 is a Mn(2+) binding site. 2 residues coordinate UDP-alpha-D-glucose: Gly-216 and Lys-219. 4 disordered regions span residues 264–331 (VKGE…ANFP), 381–444 (PEPT…RGNA), 460–533 (KHRR…GVPA), and 603–686 (KPLR…VLET). 2 stretches are compositionally biased toward low complexity: residues 285–308 (SSQS…YTSH) and 398–416 (SAAS…ASPT). The tract at residues 307 to 686 (SHGASWDASR…TEEERDVLET (380 aa)) is not required for catalytic activity. Composition is skewed to polar residues over residues 424 to 442 (VTPT…TTRG) and 471 to 483 (AATS…GRAQ). Positions 677-686 (TEEERDVLET) are enriched in acidic residues.

This sequence belongs to the glycosyltransferase 8 family. Glycogenin subfamily. As to quaternary structure, interacts with glycogen synthase gsy-1; the interaction is direct. Mn(2+) is required as a cofactor.

The protein localises to the cytoplasm. It is found in the vacuole. The enzyme catalyses L-tyrosyl-[glycogenin] + UDP-alpha-D-glucose = alpha-D-glucosyl-L-tyrosyl-[glycogenin] + UDP + H(+). It catalyses the reaction [1,4-alpha-D-glucosyl](n)-L-tyrosyl-[glycogenin] + UDP-alpha-D-glucose = [1,4-alpha-D-glucosyl](n+1)-L-tyrosyl-[glycogenin] + UDP + H(+). In terms of biological role, self-glucosylating initiator of glycogen synthesis. It catalyzes the formation of a short alpha (1,4)-glucosyl chain covalently attached via a glucose 1-O-tyrosyl linkage to internal tyrosine residues and these chains act as primers for the elongation reaction catalyzed by glycogen synthase. The polypeptide is Glycogenin (Neurospora crassa (strain ATCC 24698 / 74-OR23-1A / CBS 708.71 / DSM 1257 / FGSC 987)).